The chain runs to 272 residues: Tryptophan synthase alpha chain (272 aa).

Catalysis depends on proton acceptor residues E53 and D64.

The protein belongs to the TrpA family. In terms of assembly, tetramer of two alpha and two beta chains.

It carries out the reaction (1S,2R)-1-C-(indol-3-yl)glycerol 3-phosphate + L-serine = D-glyceraldehyde 3-phosphate + L-tryptophan + H2O. The protein operates within amino-acid biosynthesis; L-tryptophan biosynthesis; L-tryptophan from chorismate: step 5/5. In terms of biological role, the alpha subunit is responsible for the aldol cleavage of indoleglycerol phosphate to indole and glyceraldehyde 3-phosphate. The protein is Tryptophan synthase alpha chain of Xanthomonas campestris pv. campestris (strain 8004).